A 379-amino-acid chain; its full sequence is C-C chemokine receptor type 7 (379 aa).

A signal peptide spans 1 to 24 (MDLGKPMKNVLVVALLVIFQVCLC). At 25–59 (QDEVTDNYIGDNTTVDYTLYESVCFKKDVRNFKAW) the chain is on the extracellular side. An N-linked (GlcNAc...) asparagine glycan is attached at Asn36. A helical membrane pass occupies residues 60–86 (FLPIMYSIICFVGLLGNGLVMLTYIYF). The Cytoplasmic segment spans residues 87 to 95 (KRLKTMTDT). The helical transmembrane segment at 96–116 (YLLNLALADILFLLTLPFWAY) threads the bilayer. The Extracellular segment spans residues 117–130 (SAAKSWVFGVHVCK). Cysteines 129 and 210 form a disulfide. Residues 131-152 (LIFGIYKISFFSGMLLLLCISI) traverse the membrane as a helical segment. The Cytoplasmic portion of the chain corresponds to 153-170 (DRYVAIVQAVSAHRHRAR). The helical transmembrane segment at 171 to 191 (VLLISKLSCLGIWMLAIVLST) threads the bilayer. At 192–219 (PEVMYSGIQKSSSEQALRCSLVTEHVEA) the chain is on the extracellular side. Residues 220–247 (LITIQVAQMVVGFLIPLMAMSFCYLVII) form a helical membrane-spanning segment. At 248–263 (RTLLQARNFERNKAIK) the chain is on the cytoplasmic side. The helical transmembrane segment at 264-289 (VIIAVVVVFVAFQLPYNGVVLAHTVA) threads the bilayer. The Extracellular segment spans residues 290–314 (NFNITSGTSCELSKQLNIAYDVTYS). Residue Asn292 is glycosylated (N-linked (GlcNAc...) asparagine). A helical membrane pass occupies residues 315-332 (LACVRCCVNPFLYAFIGV). Topologically, residues 333–379 (KFRSDLFKLFKDLGCLSQEQLRQWSFCRHTRRSSMSVEAETTTTFSP) are cytoplasmic.

This sequence belongs to the G-protein coupled receptor 1 family.

It is found in the cell membrane. In terms of biological role, receptor for the MIP-3-beta chemokine. The protein is C-C chemokine receptor type 7 (CCR7) of Bos taurus (Bovine).